We begin with the raw amino-acid sequence, 421 residues long: Zinc finger protein Pegasus (421 aa).

Positions 35–55 (GDKEAETLQGAGTEGDQNGLD) are disordered. 3 C2H2-type zinc fingers span residues 82-104 (LKCR…IRIH), 110-132 (HRCH…MRSH), and 138-161 (YKCE…RRKH). Residues 229 to 238 (SMTKSSQTSG) show a composition bias toward polar residues. 2 disordered regions span residues 229–249 (SMTK…LMVD) and 292–358 (QPAT…PTLP). Positions 292–313 (QPATPAVVSSVSASIAQSSSPT) are enriched in low complexity. The span at 339–351 (HTSTPSISNSQPS) shows a compositional bias: polar residues. 2 C2H2-type zinc fingers span residues 366–388 (HHCQ…MGCH) and 394–418 (FQCN…RGQH).

It belongs to the Ikaros C2H2-type zinc-finger protein family. Probably self-associates.

It localises to the nucleus. In terms of biological role, transcriptional repressor that binds the core 5'GNNTGTNG-3' DNA consensus sequence. In Gallus gallus (Chicken), this protein is Zinc finger protein Pegasus (IKZF5).